A 388-amino-acid chain; its full sequence is Processive diacylglycerol beta-glucosyltransferase (388 aa).

It belongs to the glycosyltransferase 28 family. UgtP subfamily.

Its subcellular location is the cell membrane. The catalysed reaction is a 1,2-diacyl-3-O-(beta-D-glucopyranosyl)-sn-glycerol + UDP-alpha-D-glucose = a 1,2-diacyl-3-O-(beta-D-Glc-(1-&gt;6)-beta-D-Glc)-sn-glycerol + UDP + H(+). The enzyme catalyses a 1,2-diacyl-3-O-(beta-D-Glc-(1-&gt;6)-beta-D-Glc)-sn-glycerol + UDP-alpha-D-glucose = a 1,2-diacyl-3-O-(beta-D-Glc-(1-&gt;6)-beta-D-Glc-(1-&gt;6)-beta-D-Glc)-sn-glycerol + UDP + H(+). It catalyses the reaction a 1,2-diacyl-sn-glycerol + UDP-alpha-D-glucose = a 1,2-diacyl-3-O-(beta-D-glucopyranosyl)-sn-glycerol + UDP + H(+). It participates in glycolipid metabolism; diglucosyl-diacylglycerol biosynthesis. Functionally, processive glucosyltransferase involved in the biosynthesis of both the bilayer- and non-bilayer-forming membrane glucolipids. Is able to successively transfer up to three glucosyl residues to diacylglycerol (DAG), thereby catalyzing the formation of beta-monoglucosyl-DAG (3-O-(beta-D-glucopyranosyl)-1,2-diacyl-sn-glycerol), beta-diglucosyl-DAG (3-O-(beta-D-glucopyranosyl-beta-(1-&gt;6)-D-glucopyranosyl)-1,2-diacyl-sn-glycerol) and beta-triglucosyl-DAG (3-O-(beta-D-glucopyranosyl-beta-(1-&gt;6)-D-glucopyranosyl-beta-(1-&gt;6)-D-glucopyranosyl)-1,2-diacyl-sn-glycerol). Beta-diglucosyl-DAG is the predominant glycolipid found in Bacillales and is also used as a membrane anchor for lipoteichoic acid (LTA). The sequence is that of Processive diacylglycerol beta-glucosyltransferase from Bacillus thuringiensis (strain Al Hakam).